The sequence spans 185 residues: Peptidyl-tRNA hydrolase (185 aa).

Position 14 (Tyr14) interacts with tRNA. Catalysis depends on His19, which acts as the Proton acceptor. Residues Tyr64, Asn66, and Asn112 each coordinate tRNA.

This sequence belongs to the PTH family. As to quaternary structure, monomer.

The protein localises to the cytoplasm. The catalysed reaction is an N-acyl-L-alpha-aminoacyl-tRNA + H2O = an N-acyl-L-amino acid + a tRNA + H(+). Hydrolyzes ribosome-free peptidyl-tRNAs (with 1 or more amino acids incorporated), which drop off the ribosome during protein synthesis, or as a result of ribosome stalling. Its function is as follows. Catalyzes the release of premature peptidyl moieties from peptidyl-tRNA molecules trapped in stalled 50S ribosomal subunits, and thus maintains levels of free tRNAs and 50S ribosomes. The polypeptide is Peptidyl-tRNA hydrolase (Ligilactobacillus salivarius (strain UCC118) (Lactobacillus salivarius)).